The chain runs to 730 residues: Cyclin-dependent kinase 12 (730 aa).

Disordered regions lie at residues 1–230 and 246–283; these read MEIS…APFS and FSLS…IATR. A compositionally biased stretch (basic and acidic residues) spans 9 to 21; the sequence is THERDRKGSYGHR. The span at 57 to 67 shows a compositional bias: polar residues; sequence SISPQYKQRNW. Residues 75 to 94 show a composition bias toward basic and acidic residues; sequence GRDRGRNDFSYRKKGKDYNK. Composition is skewed to basic residues over residues 95 to 122 and 151 to 163; these read RRDK…KRRN and KSKK…RKHS. Positions 194 to 203 are enriched in low complexity; the sequence is FNINPFQPMF. The span at 204–230 shows a compositional bias: pro residues; the sequence is SQPPPPPLPPNSQFMTPPPRPPPAPFS. Residues 313 to 605 form the Protein kinase domain; it reads MLDQIGEGTY…AKEALNHPWI (293 aa). ATP contacts are provided by residues 317 to 325, K340, and 398 to 403; these read IGEGTYGQV and EYVDHD. The Proton acceptor role is filled by D444. The tract at residues 623–730 is disordered; it reads DCHEMWSKKQ…QSQYQSVFFK (108 aa). H625 contributes to the ATP binding site. Residues 676 to 688 are compositionally biased toward basic residues; the sequence is NHHHHHHHSHHHA. Polar residues predominate over residues 714 to 730; sequence NNHQPVPQSQYQSVFFK.

It belongs to the protein kinase superfamily. CMGC Ser/Thr protein kinase family. CDC2/CDKX subfamily.

It is found in the nucleus. The catalysed reaction is [DNA-directed RNA polymerase] + ATP = phospho-[DNA-directed RNA polymerase] + ADP + H(+). It catalyses the reaction L-seryl-[protein] + ATP = O-phospho-L-seryl-[protein] + ADP + H(+). The enzyme catalyses L-threonyl-[protein] + ATP = O-phospho-L-threonyl-[protein] + ADP + H(+). Its function is as follows. Cyclin-dependent kinase which displays CTD kinase activity: hyperphosphorylates 'Ser-2' in the C-terminal heptapeptide repeat domain (CTD) of the largest RNA polymerase II subunit, thereby acting as a key regulator of transcription elongation. Required for normal reproduction. This Caenorhabditis elegans protein is Cyclin-dependent kinase 12.